The chain runs to 632 residues: MNQTQSYMDVHTSHFSSPQPYGSHGATAGGMVPYSHYQQPPPLLPPGSAGYPSTPGSYSYPYSNGVASTTQPASNSISSQVPAQILPLPAMTSHTVTPHGYVSGAAQSQQNAVHDPTGQTCPPGAKPRVTATLWEDEGSLCYQVEAKGVCVARREDNHMINGTKLLNVAGMTRGRRDGILKSEKVRHVVKIGPMHLKGVWIPYERALDFANKEKITDLLYPLFVHNIGGLLYHPANSNRTNMVVHDSQQRRLEGSQTARTSQGPQAPALHHHHSMNGSVPSHMPQASASTPQTNGRPELNRAHTFPTPPASASSLIGIPNQGSTYDWNSQNINSTVQTSQNVPIDNGLNSTRSMPTTPATTPPGNNLQGMPPYQNQPAYDSSKSYYSAAPSSQAQYASQPLPAHSLTYGQPMMKDLGSSGRPPLGPVEQEHDEVKVDRYNQPNGQVTNGTEEENGQQQEPEYVQDNVAGSYANRNSYTYTTNPSVSSLSGDHSQLGGSPSHQNGSDRMTPRTAGTNPPPQWSQGYNTPPRAVPAGSISNIVSDTRGAPNGDSYAPGTAYASNYSGYSSVNGSSMGSTKRMRDDDDDHLSRSDGRENEYETKRRKTLTEPPVGGAFMQMQQQPVPAGGVMRRR.

Polar residues predominate over residues 1–20; that stretch reads MNQTQSYMDVHTSHFSSPQP. The segment at 1-27 is disordered; that stretch reads MNQTQSYMDVHTSHFSSPQPYGSHGAT. An HTH APSES-type domain is found at 128–234; the sequence is RVTATLWEDE…HNIGGLLYHP (107 aa). Positions 162 to 183 form a DNA-binding region, H-T-H motif; sequence GTKLLNVAGMTRGRRDGILKSE. 4 disordered regions span residues 246–315, 340–386, 403–460, and 473–632; these read DSQQ…ASSL, QNVP…KSYY, AHSL…QQEP, and NRNS…MRRR. Composition is skewed to polar residues over residues 254–264, 275–295, 340–354, and 364–376; these read GSQTARTSQGP, MNGS…QTNG, QNVP…TRSM, and GNNL…YQNQ. The span at 377–386 shows a compositional bias: low complexity; sequence PAYDSSKSYY. Positions 428–438 are enriched in basic and acidic residues; sequence EQEHDEVKVDR. Positions 473–506 are enriched in polar residues; it reads NRNSYTYTTNPSVSSLSGDHSQLGGSPSHQNGSD. A compositionally biased stretch (low complexity) spans 558–576; it reads AYASNYSGYSSVNGSSMGS. Residues 578–604 form a nuclear localization domain region; sequence KRMRDDDDDHLSRSDGRENEYETKRRK. Positions 579–600 are enriched in basic and acidic residues; that stretch reads RMRDDDDDHLSRSDGRENEYET.

Belongs to the EFG1/PHD1/stuA family.

Its subcellular location is the nucleus. Functionally, transcription factor that regulates asexual reproduction. Binds the StuA-response elements (StRE) with the consensus sequence 5'-(A/T)CGCG(T/A)N(A/C)-3' at the promoters of target genes. Required for accurate spatial organization of the developing conidiophore. Primarily involved in the formation of the uninucleate sterigmata, which arise by budding in this multicellular structure. Required for metula and phialide formation during conidiation but is not required for dimorphic growth. The protein is Cell pattern formation-associated protein stuA of Talaromyces marneffei (Penicillium marneffei).